The sequence spans 380 residues: Cytochrome b (380 aa).

The next 4 membrane-spanning stretches (helical) occupy residues 34-54 (FGSL…LLAA), 78-99 (WLIR…YMHI), 114-134 (WNTG…GYVL), and 179-199 (FFTL…IHLT). Residues H84 and H98 each coordinate heme b. Heme b contacts are provided by H183 and H197. A ubiquinone is bound at residue H202. A run of 4 helical transmembrane segments spans residues 227 to 247 (LKDT…ALFS), 289 to 309 (LGGV…PLLH), 321 to 341 (LSQL…WVGS), and 348 to 368 (FIII…ILFP).

This sequence belongs to the cytochrome b family. The cytochrome bc1 complex contains 11 subunits: 3 respiratory subunits (MT-CYB, CYC1 and UQCRFS1), 2 core proteins (UQCRC1 and UQCRC2) and 6 low-molecular weight proteins (UQCRH/QCR6, UQCRB/QCR7, UQCRQ/QCR8, UQCR10/QCR9, UQCR11/QCR10 and a cleavage product of UQCRFS1). This cytochrome bc1 complex then forms a dimer. Requires heme b as cofactor.

The protein localises to the mitochondrion inner membrane. Functionally, component of the ubiquinol-cytochrome c reductase complex (complex III or cytochrome b-c1 complex) that is part of the mitochondrial respiratory chain. The b-c1 complex mediates electron transfer from ubiquinol to cytochrome c. Contributes to the generation of a proton gradient across the mitochondrial membrane that is then used for ATP synthesis. This is Cytochrome b (MT-CYB) from Balearica regulorum (Grey crowned-crane).